We begin with the raw amino-acid sequence, 126 residues long: Profilin-3 (126 aa).

The protein belongs to the profilin family. As to quaternary structure, occurs in many kinds of cells as a complex with monomeric actin in a 1:1 ratio. In embryos, expression is specifically detected in body wall muscle cells. In adults, expression is localized to a striking dot-like fashion in body wall muscle.

It is found in the cytoplasm. The protein resides in the cytoskeleton. Its function is as follows. Binds to actin and affects the structure of the cytoskeleton. At high concentrations, profilin prevents the polymerization of actin, whereas it enhances it at low concentrations. By binding to PIP2, it inhibits the formation of IP3 and DG. Also binds to poly(L-proline) and phosphatidylinositol 4,5-bisphosphate micelles. This chain is Profilin-3 (pfn-3), found in Caenorhabditis elegans.